The primary structure comprises 552 residues: 5'-AMP-activated protein kinase catalytic subunit alpha-2 (552 aa).

A Protein kinase domain is found at 16-268; sequence YVLGDTLGVG…IKDIREHEWF (253 aa). Residues 22–30 and Lys45 each bind ATP; that span reads LGVGTFGKV. The Proton acceptor role is filled by Asp139. Phosphothreonine; by LKB1 and CaMKK2 is present on Thr172. Thr258 carries the post-translational modification Phosphothreonine. The tract at residues 291-376 is AIS; sequence EAVKEVCEKF…PERMPPLIAD (86 aa). Position 377 is a phosphoserine (Ser377). Positions 477 to 521 are disordered; sequence VEQRSGSSTPQRSCSAAGLHRPRSSFDSTTAESHSLSGSLTGSLT. Polar residues predominate over residues 480 to 490; that stretch reads RSGSSTPQRSC. Ser491 is subject to Phosphoserine. Residues 501 to 510 show a composition bias toward polar residues; the sequence is SFDSTTAESH. The span at 511–521 shows a compositional bias: low complexity; that stretch reads SLSGSLTGSLT.

Belongs to the protein kinase superfamily. CAMK Ser/Thr protein kinase family. SNF1 subfamily. As to quaternary structure, AMPK is a heterotrimer of an alpha catalytic subunit (PRKAA1 or PRKAA2), a beta (PRKAB1 or PRKAB2) and a gamma non-catalytic subunits (PRKAG1, PRKAG2 or PRKAG3). Interacts with FNIP1 and FNIP2. Associates with internalized insulin receptor/INSR complexes on Golgi/endosomal membranes; PRKAA2/AMPK2 together with ATIC and HACD3/PTPLAD1 is proposed to be part of a signaling network regulating INSR autophosphorylation and endocytosis. Interacts with ARF6. The phosphorylated form at Thr-172 mediated by CamKK2 interacts with ACSS2. It depends on Mg(2+) as a cofactor. Ubiquitinated. In terms of processing, phosphorylated at Thr-172 by STK11/LKB1 in complex with STE20-related adapter-alpha (STRADA) pseudo kinase and CAB39. Also phosphorylated at Thr-172 by CAMKK2; triggered by a rise in intracellular calcium ions, without detectable changes in the AMP/ATP ratio. CAMKK1 can also phosphorylate Thr-172, but at much lower level. Dephosphorylated by protein phosphatase 2A and 2C (PP2A and PP2C). Phosphorylated by ULK1; leading to negatively regulate AMPK activity and suggesting the existence of a regulatory feedback loop between ULK1 and AMPK. Dephosphorylated by PPM1A and PPM1B at Thr-172 (mediated by STK11/LKB1).

The protein resides in the cytoplasm. The protein localises to the nucleus. The catalysed reaction is L-seryl-[protein] + ATP = O-phospho-L-seryl-[protein] + ADP + H(+). The enzyme catalyses L-threonyl-[protein] + ATP = O-phospho-L-threonyl-[protein] + ADP + H(+). It catalyses the reaction L-seryl-[acetyl-CoA carboxylase] + ATP = O-phospho-L-seryl-[acetyl-CoA carboxylase] + ADP + H(+). It carries out the reaction L-seryl-[3-hydroxy-3-methylglutaryl-coenzyme A reductase] + ATP = O-phospho-L-seryl-[3-hydroxy-3-methylglutaryl-coenzyme A reductase] + ADP + H(+). Activated by phosphorylation on Thr-172. Binding of AMP to non-catalytic gamma subunit (PRKAG1, PRKAG2 or PRKAG3) results in allosteric activation, inducing phosphorylation on Thr-172. AMP-binding to gamma subunit also sustains activity by preventing dephosphorylation of Thr-172. ADP also stimulates Thr-172 phosphorylation, without stimulating already phosphorylated AMPK. ATP promotes dephosphorylation of Thr-172, rendering the enzyme inactive. Under physiological conditions AMPK mainly exists in its inactive form in complex with ATP, which is much more abundant than AMP. AMPK is activated by antihyperglycemic drug metformin, a drug prescribed to patients with type 2 diabetes: in vivo, metformin seems to mainly inhibit liver gluconeogenesis. However, metformin can be used to activate AMPK in muscle and other cells in culture or ex vivo. Selectively inhibited by compound C (6-[4-(2-Piperidin-1-yl-ethoxy)-phenyl)]-3-pyridin-4-yl-pyyrazolo[1,5-a] pyrimidine. Activated by resveratrol, a natural polyphenol present in red wine, and S17834, a synthetic polyphenol. Salicylate/aspirin directly activates kinase activity, primarily by inhibiting Thr-172 dephosphorylation. Its function is as follows. Catalytic subunit of AMP-activated protein kinase (AMPK), an energy sensor protein kinase that plays a key role in regulating cellular energy metabolism. In response to reduction of intracellular ATP levels, AMPK activates energy-producing pathways and inhibits energy-consuming processes: inhibits protein, carbohydrate and lipid biosynthesis, as well as cell growth and proliferation. AMPK acts via direct phosphorylation of metabolic enzymes, and by longer-term effects via phosphorylation of transcription regulators. Regulates lipid synthesis by phosphorylating and inactivating lipid metabolic enzymes such as ACACA, ACACB, GYS1, HMGCR and LIPE; regulates fatty acid and cholesterol synthesis by phosphorylating acetyl-CoA carboxylase (ACACA and ACACB) and hormone-sensitive lipase (LIPE) enzymes, respectively. Promotes lipolysis of lipid droplets by mediating phosphorylation of isoform 1 of CHKA (CHKalpha2). Regulates insulin-signaling and glycolysis by phosphorylating IRS1, PFKFB2 and PFKFB3. Involved in insulin receptor/INSR internalization. AMPK stimulates glucose uptake in muscle by increasing the translocation of the glucose transporter SLC2A4/GLUT4 to the plasma membrane, possibly by mediating phosphorylation of TBC1D4/AS160. Regulates transcription and chromatin structure by phosphorylating transcription regulators involved in energy metabolism such as CRTC2/TORC2, FOXO3, histone H2B, HDAC5, MEF2C, MLXIPL/ChREBP, EP300, HNF4A, p53/TP53, SREBF1, SREBF2 and PPARGC1A. Acts as a key regulator of glucose homeostasis in liver by phosphorylating CRTC2/TORC2, leading to CRTC2/TORC2 sequestration in the cytoplasm. In response to stress, phosphorylates 'Ser-36' of histone H2B (H2BS36ph), leading to promote transcription. Acts as a key regulator of cell growth and proliferation by phosphorylating FNIP1, TSC2, RPTOR, WDR24 and ATG1/ULK1: in response to nutrient limitation, negatively regulates the mTORC1 complex by phosphorylating RPTOR component of the mTORC1 complex and by phosphorylating and activating TSC2. Also phosphorylates and inhibits GATOR2 subunit WDR24 in response to nutrient limitation, leading to suppress glucose-mediated mTORC1 activation. In response to energetic stress, phosphorylates FNIP1, inactivating the non-canonical mTORC1 signaling, thereby promoting nuclear translocation of TFEB and TFE3, and inducing transcription of lysosomal or autophagy genes. In response to nutrient limitation, promotes autophagy by phosphorylating and activating ATG1/ULK1. In that process, it also activates WDR45/WIPI4. Phosphorylates CASP6, thereby preventing its autoprocessing and subsequent activation. AMPK also acts as a regulator of circadian rhythm by mediating phosphorylation of CRY1, leading to destabilize it. May regulate the Wnt signaling pathway by phosphorylating CTNNB1, leading to stabilize it. Also acts as a regulator of cellular polarity by remodeling the actin cytoskeleton; probably by indirectly activating myosin. Also phosphorylates CFTR, EEF2K, KLC1, NOS3 and SLC12A1. Plays an important role in the differential regulation of pro-autophagy (composed of PIK3C3, BECN1, PIK3R4 and UVRAG or ATG14) and non-autophagy (composed of PIK3C3, BECN1 and PIK3R4) complexes, in response to glucose starvation. Can inhibit the non-autophagy complex by phosphorylating PIK3C3 and can activate the pro-autophagy complex by phosphorylating BECN1. Upon glucose starvation, promotes ARF6 activation in a kinase-independent manner leading to cell migration. Upon glucose deprivation mediates the phosphorylation of ACSS2 at 'Ser-659', which exposes the nuclear localization signal of ACSS2, required for its interaction with KPNA1 and nuclear translocation. Upon stress, regulates mitochondrial fragmentation through phosphorylation of MTFR1L. This chain is 5'-AMP-activated protein kinase catalytic subunit alpha-2, found in Homo sapiens (Human).